A 295-amino-acid chain; its full sequence is MPYQQITVNVNDAVAERLADALMEHGALSAAIEDAYAGTQNEQAIFGEPGMPAEQIWQQSKVIALFGEHDEAAAIIQTATQECGLKDLAYTGETIEDQDWVRLTQSQFDPIRISDRLWITPSWHEVPEGSAVNLRLDPGLAFGTGSHPTTRLCLKWLDTQLKNGESVLDYGCGSGILTIAALKLGAGFAVGVDIDEQAVRAGKDNAAQNNVDAQFFLPDGLPQGQFDVVVANILANPLRMLGEMLAARTKQGGRIVLSGLLDEQAEELGGIYSQWFDLDPAETEEGWARLSGVKR.

Thr-150, Gly-171, Asp-193, and Asn-232 together coordinate S-adenosyl-L-methionine.

It belongs to the methyltransferase superfamily. PrmA family.

It localises to the cytoplasm. The enzyme catalyses L-lysyl-[protein] + 3 S-adenosyl-L-methionine = N(6),N(6),N(6)-trimethyl-L-lysyl-[protein] + 3 S-adenosyl-L-homocysteine + 3 H(+). Its function is as follows. Methylates ribosomal protein L11. This is Ribosomal protein L11 methyltransferase from Neisseria meningitidis serogroup B (strain ATCC BAA-335 / MC58).